A 94-amino-acid polypeptide reads, in one-letter code: Progonadoliberin-1 (94 aa).

The signal sequence occupies residues 1 to 22 (MAAKILALWLLLAGTVFPQGCC). Gln-23 is subject to Pyrrolidone carboxylic acid. The residue at position 32 (Gly-32) is a Glycine amide.

This sequence belongs to the GnRH family. In terms of tissue distribution, synthesized in preoptic neurons and is transported to the pituitary in the preoptic-hypophyseal axons.

The protein resides in the secreted. Functionally, stimulates the secretion of gonadotropins. May be responsible for the regulation of the hypothalamic-pituitary-gonadal axis. The sequence is that of Progonadoliberin-1 (gnrh1) from Haplochromis burtoni (Burton's mouthbrooder).